Reading from the N-terminus, the 542-residue chain is CTP synthase (542 aa).

Residues 1-265 (MARYVFITGG…DSEVLSAFGI (265 aa)) are amidoligase domain. CTP is bound at residue S13. S13 provides a ligand contact to UTP. Position 14–19 (14–19 (SLGKGI)) interacts with ATP. Y54 lines the L-glutamine pocket. Residue D71 participates in ATP binding. Positions 71 and 139 each coordinate Mg(2+). CTP is bound by residues 146–148 (DIE), 186–191 (KTKPTQ), and K222. Residues 186-191 (KTKPTQ) and K222 contribute to the UTP site. One can recognise a Glutamine amidotransferase type-1 domain in the interval 291 to 541 (TIAVVGKYTG…IEAAIEQSRL (251 aa)). Position 353 (G353) interacts with L-glutamine. C380 (nucleophile; for glutamine hydrolysis) is an active-site residue. L-glutamine-binding positions include 381–384 (FGMQ), E404, and R469. Active-site residues include H514 and E516.

This sequence belongs to the CTP synthase family. In terms of assembly, homotetramer.

The catalysed reaction is UTP + L-glutamine + ATP + H2O = CTP + L-glutamate + ADP + phosphate + 2 H(+). It carries out the reaction L-glutamine + H2O = L-glutamate + NH4(+). It catalyses the reaction UTP + NH4(+) + ATP = CTP + ADP + phosphate + 2 H(+). Its pathway is pyrimidine metabolism; CTP biosynthesis via de novo pathway; CTP from UDP: step 2/2. Allosterically activated by GTP, when glutamine is the substrate; GTP has no effect on the reaction when ammonia is the substrate. The allosteric effector GTP functions by stabilizing the protein conformation that binds the tetrahedral intermediate(s) formed during glutamine hydrolysis. Inhibited by the product CTP, via allosteric rather than competitive inhibition. In terms of biological role, catalyzes the ATP-dependent amination of UTP to CTP with either L-glutamine or ammonia as the source of nitrogen. Regulates intracellular CTP levels through interactions with the four ribonucleotide triphosphates. The protein is CTP synthase of Brucella suis (strain ATCC 23445 / NCTC 10510).